A 238-amino-acid polypeptide reads, in one-letter code: Protein-lysine N-methyltransferase efm4 (238 aa).

Belongs to the class I-like SAM-binding methyltransferase superfamily. EFM4 family.

Its subcellular location is the cytoplasm. The protein localises to the nucleus. In terms of biological role, S-adenosyl-L-methionine-dependent protein-lysine N-methyltransferase that mono- and dimethylates elongation factor 1-alpha at 'Lys-316'. May play a role in intracellular transport. The sequence is that of Protein-lysine N-methyltransferase efm4 from Schizosaccharomyces pombe (strain 972 / ATCC 24843) (Fission yeast).